The chain runs to 418 residues: BTB and MATH domain-containing protein 41 (418 aa).

The segment at 1-33 (MEINNGAQPENAAVSIPSRSPSGKSEKRKSPSI) is disordered. Positions 45-173 (SFTNYWSVER…NDILTIGCEL (129 aa)) constitute an MATH domain. Residues 232–293 (SDFIIVASCG…TLDVLLRHMY (62 aa)) form the BTB domain.

In terms of assembly, interacts with cul-3.

Its pathway is protein modification; protein ubiquitination. In terms of biological role, probable substrate-specific adapter of an E3 ubiquitin-protein ligase complex which mediates the ubiquitination and subsequent proteasomal degradation of target proteins. This Caenorhabditis elegans protein is BTB and MATH domain-containing protein 41 (bath-41).